The primary structure comprises 189 residues: Probable nicotinate-nucleotide adenylyltransferase (189 aa).

It belongs to the NadD family.

It carries out the reaction nicotinate beta-D-ribonucleotide + ATP + H(+) = deamido-NAD(+) + diphosphate. Its pathway is cofactor biosynthesis; NAD(+) biosynthesis; deamido-NAD(+) from nicotinate D-ribonucleotide: step 1/1. Its function is as follows. Catalyzes the reversible adenylation of nicotinate mononucleotide (NaMN) to nicotinic acid adenine dinucleotide (NaAD). The sequence is that of Probable nicotinate-nucleotide adenylyltransferase from Ruegeria sp. (strain TM1040) (Silicibacter sp.).